The following is an 85-amino-acid chain: Cytochrome c6 (85 aa).

Heme c is bound by residues Cys14, Cys17, His18, and Met58.

Belongs to the cytochrome c family. PetJ subfamily. Monomer. In terms of processing, binds 1 heme c group covalently per subunit.

The protein localises to the cellular thylakoid lumen. Functions as an electron carrier between membrane-bound cytochrome b6-f and photosystem I in oxygenic photosynthesis. The sequence is that of Cytochrome c6 (petJ) from Leptolyngbya boryana (Plectonema boryanum).